A 63-amino-acid polypeptide reads, in one-letter code: Cecropin-A1 (63 aa).

Residues 1 to 23 (MNFYNIFVFVALILAITIGQSEA) form the signal peptide. The residue at position 62 (Arg-62) is an Arginine amide.

The protein belongs to the cecropin family.

It is found in the secreted. Its function is as follows. Cecropins have lytic and antibacterial activity against several Gram-positive and Gram-negative bacteria. This Drosophila sechellia (Fruit fly) protein is Cecropin-A1 (CecA1).